Consider the following 22-residue polypeptide: Short-chain-enoyl-CoA hydratase (22 aa).

It belongs to the enoyl-CoA hydratase/isomerase family.

The enzyme catalyses a short-chain (3S)-3-hydroxyacyl-CoA = a short-chain (2E)-enoyl-CoA + H2O. It participates in lipid metabolism; butanoate metabolism. The protein is Short-chain-enoyl-CoA hydratase (crt) of Clostridium pasteurianum.